Here is a 325-residue protein sequence, read N- to C-terminus: Protein VP6-B (325 aa).

Disordered regions lie at residues isoleucine 23–alanine 123 and valine 176–alanine 229. Basic and acidic residues-rich tracts occupy residues glutamate 32–aspartate 52 and serine 61–isoleucine 79. Positions lysine 106–alanine 123 are enriched in gly residues. 2 stretches are compositionally biased toward basic and acidic residues: residues valine 176–arginine 201 and proline 210–glutamate 226.

Belongs to the orbivirus VP6 family.

The protein resides in the virion. Its function is as follows. Surrounds and interacts with the genomic dsRNA. Possesses ss- and dsRNA-binding capacity. Its hydrophilic nature and capability to bind ss- and dsRNA suggest that it interacts with BTV genomic RNA. This chain is Protein VP6-B (Segment-9), found in Bluetongue virus 10 (isolate USA) (BTV 10).